Consider the following 351-residue polypeptide: UDP-3-O-acylglucosamine N-acyltransferase (351 aa).

Residue His-240 is the Proton acceptor of the active site.

The protein belongs to the transferase hexapeptide repeat family. LpxD subfamily. In terms of assembly, homotrimer.

It carries out the reaction a UDP-3-O-[(3R)-3-hydroxyacyl]-alpha-D-glucosamine + a (3R)-hydroxyacyl-[ACP] = a UDP-2-N,3-O-bis[(3R)-3-hydroxyacyl]-alpha-D-glucosamine + holo-[ACP] + H(+). The protein operates within bacterial outer membrane biogenesis; LPS lipid A biosynthesis. Catalyzes the N-acylation of UDP-3-O-acylglucosamine using 3-hydroxyacyl-ACP as the acyl donor. Is involved in the biosynthesis of lipid A, a phosphorylated glycolipid that anchors the lipopolysaccharide to the outer membrane of the cell. The polypeptide is UDP-3-O-acylglucosamine N-acyltransferase (Methylacidiphilum infernorum (isolate V4) (Methylokorus infernorum (strain V4))).